Reading from the N-terminus, the 1061-residue chain is E3 SUMO-protein ligase ZNF451 (1061 aa).

A disordered region spans residues 1–38 (MGDPGSEIIESVPPAGPEASESTTDENEDDIQFVSEGP). A sufficient for E3 SUMO-protein ligase activity region spans residues 1–246 (MGDPGSEIIE…TDDGHNNNLL (246 aa)). An important for interaction with SUMO1 and SUMO2 region spans residues 1–344 (MGDPGSEIIE…RVHCRNAGPV (344 aa)). Residues 30–37 (DIQFVSEG) are interaction with SUMO2 1. The PLRP motif lies at 38-41 (PLRP). An interaction with SUMO2 2 region spans residues 42–50 (VLEYIDLVS). Residues K75, K77, K106, I121, A130, L138, K139, K144, and K153 each participate in a glycyl lysine isopeptide (Lys-Gly) (interchain with G-Cter in SUMO2) cross-link. S155 carries the post-translational modification Phosphoserine. An Omega-N-methylarginine modification is found at R158. Residues V164 and K167 each participate in a glycyl lysine isopeptide (Lys-Gly) (interchain with G-Cter in SUMO2) cross-link. The segment at 168–525 (PILCPIMHCN…HMSRIHGGAH (358 aa)) is important for interaction with SMAD4. The segment at 169–195 (ILCPIMHCNKEFDNGHLLLGHLKRFDH) adopts a C2H2-type 1 zinc-finger fold. Glycyl lysine isopeptide (Lys-Gly) (interchain with G-Cter in SUMO2) cross-links involve residues Q226, G240, P247, S263, K270, K275, K283, D286, K288, P293, K301, and K309. The C2H2-type 2 zinc finger occupies 253–277 (FACPNCFLLFSRKEECSKHMSGKNH). The C2H2-type 3 zinc finger occupies 315–337 (VKCVACHKTLRSHMELTAHFRVH). K357 is covalently cross-linked (Glycyl lysine isopeptide (Lys-Gly) (interchain with G-Cter in SUMO2)). The C2H2-type 4 zinc-finger motif lies at 362–386 (GYCPDCNQVFVDETSTQNHKQNSGH). K423 participates in a covalent cross-link: Glycyl lysine isopeptide (Lys-Gly) (interchain with G-Cter in SUMO2). Phosphoserine is present on S432. Glycyl lysine isopeptide (Lys-Gly) (interchain with G-Cter in SUMO2) cross-links involve residues K434, K446, K452, K454, K464, F473, V490, C500, K505, D508, G522, W532, K543, and K585. The C2H2-type 5 zinc-finger motif lies at 498 to 521 (YKCVVCGKVCDDSGVIRLHMSRIH). The C2H2-type 6 zinc finger occupies 531–554 (FWCRTCKKELTRKDTIMAHVTEFH). The segment at 606-631 (WQCRICEDMFDSQEYVKQHCMSLASH) adopts a C2H2-type 7; atypical zinc-finger fold. Glycyl lysine isopeptide (Lys-Gly) (interchain with G-Cter in SUMO2) cross-links involve residues K632, K647, and K664. The C2H2-type 8 zinc finger occupies 636–659 (YSCAHCRKPFHKIETLYRHCQDEH). A C2H2-type 9 zinc finger spans residues 667–690 (YFCGLCDLIFNVEEAFLSHYEEHH). K706 participates in a covalent cross-link: Glycyl lysine isopeptide (Lys-Gly) (interchain with G-Cter in SUMO1); alternate. A Glycyl lysine isopeptide (Lys-Gly) (interchain with G-Cter in SUMO2); alternate cross-link involves residue K706. Residues K731 and K748 each participate in a glycyl lysine isopeptide (Lys-Gly) (interchain with G-Cter in SUMO2) cross-link. The segment at 753 to 776 (FRCSLCSATAQNLTDMNTHIHQVH) adopts a C2H2-type 10 zinc-finger fold. Residues K777, K779, K790, K817, K827, K832, K843, K845, K852, K951, K992, and K993 each participate in a glycyl lysine isopeptide (Lys-Gly) (interchain with G-Cter in SUMO2) cross-link. The C2H2-type 11 zinc-finger motif lies at 789 to 812 (IKCGTCTKAFHDPESAQQHFHRKH). The important for ubiquitin binding stretch occupies residues 1050 to 1061 (LEEAIRRSLEEM).

It belongs to the krueppel C2H2-type zinc-finger protein family. As to quaternary structure, homooligomer. Interacts (via N-terminal region) with SUMO1. Interacts (via N-terminal region) with SUMO2. Interacts simultaneously with two SUMO2 chains. Identified in a complex with SUMO2 and UBE2I/UBC9, where one ZNF451 interacts with one UBE2I/UBC9 and two SUMO2 chains, one bound to the UBE2I/UBC9 active site and the other to another region of the same UBE2I/UBC9 molecule. Interacts (via C-terminus) with ubiquitin. Interacts (via N-terminal zinc-finger domains) with SMAD4 (via MH2 domain). Interacts with SMAD2 and SMAD3. Identified in a complex that contains at least ZNF451, SMAD2, SMAD3 and SMAD4. Interacts with EP300. Inhibits interaction between EP300 and the SMAD4 complex. Interacts with SIMC1. Sumoylated. Predominantly sumoylated on the N-terminal region that is important for interaction with SUMO1 and SUMO2. Sumoylation is important for localization in nuclear granules; desumoylation leads to diffuse nucleoplasmic location. Autosumoylated (in vitro). Sumoylation enhances E3 SUMO-protein ligase activity.

Its subcellular location is the nucleus. It is found in the PML body. It localises to the nucleoplasm. Its pathway is protein modification; protein sumoylation. In terms of biological role, E3 SUMO-protein ligase; has a preference for SUMO2 and SUMO3 and facilitates UBE2I/UBC9-mediated sumoylation of target proteins. Plays a role in protein SUMO2 modification in response to stress caused by DNA damage and by proteasome inhibitors (in vitro). Required for MCM4 sumoylation. Has no activity with SUMO1. Preferentially transfers an additional SUMO2 chain onto the SUMO2 consensus site 'Lys-11'. Negatively regulates transcriptional activation mediated by the SMAD4 complex in response to TGF-beta signaling. Inhibits EP300-mediated acetylation of histone H3 at 'Lys-9'. Plays a role in regulating the transcription of AR targets. In Homo sapiens (Human), this protein is E3 SUMO-protein ligase ZNF451 (ZNF451).